The following is a 262-amino-acid chain: Phosphatidylglycerol--prolipoprotein diacylglyceryl transferase 1 (262 aa).

The next 4 membrane-spanning stretches (helical) occupy residues 15-35 (WYGI…SINA), 40-60 (LNFD…IIGA), 83-103 (QGGL…FIYC), and 108-128 (VDFL…QGIG). R129 serves as a coordination point for a 1,2-diacyl-sn-glycero-3-phospho-(1'-sn-glycerol). The next 3 helical transmembrane spans lie at 169–189 (TFLY…IILY), 197–217 (GVVI…IEGL), and 229–249 (VAQL…IIIV).

This sequence belongs to the Lgt family.

It localises to the cell membrane. The catalysed reaction is L-cysteinyl-[prolipoprotein] + a 1,2-diacyl-sn-glycero-3-phospho-(1'-sn-glycerol) = an S-1,2-diacyl-sn-glyceryl-L-cysteinyl-[prolipoprotein] + sn-glycerol 1-phosphate + H(+). It participates in protein modification; lipoprotein biosynthesis (diacylglyceryl transfer). In terms of biological role, catalyzes the transfer of the diacylglyceryl group from phosphatidylglycerol to the sulfhydryl group of the N-terminal cysteine of a prolipoprotein, the first step in the formation of mature lipoproteins. The protein is Phosphatidylglycerol--prolipoprotein diacylglyceryl transferase 1 of Clostridium perfringens (strain 13 / Type A).